A 173-amino-acid chain; its full sequence is Translation initiation factor IF-3 (173 aa).

It belongs to the IF-3 family. Monomer.

The protein resides in the cytoplasm. In terms of biological role, IF-3 binds to the 30S ribosomal subunit and shifts the equilibrium between 70S ribosomes and their 50S and 30S subunits in favor of the free subunits, thus enhancing the availability of 30S subunits on which protein synthesis initiation begins. The chain is Translation initiation factor IF-3 from Ehrlichia ruminantium (strain Gardel).